The following is an 846-amino-acid chain: Penicillin G acylase (846 aa).

The signal sequence occupies residues 1–26 (MKNRNRMIVNCVTASLMYYWSLPALA). Residue glutamate 178 coordinates Ca(2+). A propeptide spans 236–289 (ALLPRYDLPAPMLDRPAKGADGALLALTAGKNRETIAAQFAQGGANGLAGYPTT) (spacer peptide). The active-site Nucleophile is serine 290. Aspartate 362, valine 364, aspartate 365, proline 494, and aspartate 541 together coordinate Ca(2+).

Belongs to the peptidase S45 family. Heterodimer of an alpha subunit and a beta subunit processed from the same precursor. It depends on Ca(2+) as a cofactor.

The protein resides in the periplasm. The catalysed reaction is a penicillin + H2O = 6-aminopenicillanate + a carboxylate. In Escherichia coli, this protein is Penicillin G acylase (pac).